Reading from the N-terminus, the 700-residue chain is Methionine--tRNA ligase (700 aa).

The 'HIGH' region signature appears at 13-23 (PYANGDIHLGH). Zn(2+) is bound by residues Cys-144, Cys-147, Cys-157, and Cys-160. Positions 341–345 (KMSKS) match the 'KMSKS' region motif. Lys-344 provides a ligand contact to ATP. The tRNA-binding domain occupies 598–700 (DFAKVEMKVA…DNCVIGDLLA (103 aa)).

The protein belongs to the class-I aminoacyl-tRNA synthetase family. MetG type 1 subfamily. Homodimer. Requires Zn(2+) as cofactor.

It is found in the cytoplasm. The enzyme catalyses tRNA(Met) + L-methionine + ATP = L-methionyl-tRNA(Met) + AMP + diphosphate. Its function is as follows. Is required not only for elongation of protein synthesis but also for the initiation of all mRNA translation through initiator tRNA(fMet) aminoacylation. This Psychrobacter arcticus (strain DSM 17307 / VKM B-2377 / 273-4) protein is Methionine--tRNA ligase.